The sequence spans 63 residues: DNA-directed RNA polymerase 7 kDa subunit (63 aa).

Belongs to the poxviridae DNA-directed RNA polymerase 7 kDa subunit family. The DNA-dependent RNA polymerase used for intermediate and late genes expression consists of eight subunits 147 kDa, 133 kDa, 35 kDa, 30 kDa, 22 kDa, 19 kDa, 18 kDa and 7 kDa totalling more than 500 kDa in mass. The same holoenzyme, with the addition of the transcription-specificity factor RAP94, is used for early gene expression.

The protein resides in the virion. It catalyses the reaction RNA(n) + a ribonucleoside 5'-triphosphate = RNA(n+1) + diphosphate. Functionally, part of the DNA-dependent RNA polymerase which catalyzes the transcription of viral DNA into RNA using the four ribonucleoside triphosphates as substrates. Responsible for the transcription of early, intermediate and late genes. DNA-dependent RNA polymerase associates with the early transcription factor (ETF) thereby allowing the early genes transcription. Late transcription, and probably also intermediate transcription, require newly synthesized RNA polymerase. The chain is DNA-directed RNA polymerase 7 kDa subunit (RPO7) from Fowlpox virus (strain NVSL) (FPV).